The following is a 289-amino-acid chain: MYB transcription factor 69 (289 aa).

HTH myb-type domains follow at residues 9–61 (KAGV…TNYL) and 62–116 (RPGI…KKKL). 2 DNA-binding regions (H-T-H motif) span residues 37–61 (WRAV…TNYL) and 89–112 (WAAI…NTHL). Disordered regions lie at residues 127–162 (APPR…ADST) and 225–252 (SSAI…QQQQ). Over residues 139 to 154 (ADCRRHDMTRSSKDSH) the composition is skewed to basic and acidic residues.

Mainly expressed in highly lignified tissues such as vascular tissues.

The protein localises to the nucleus. Transcription factor that binds to the promoter of MYB31 and MYB42 and activates directly their expression, thus repressing lignin biosynthesis. The sequence is that of MYB transcription factor 69 from Zea mays (Maize).